A 177-amino-acid chain; its full sequence is Large ribosomal subunit protein uL6 (177 aa).

Belongs to the universal ribosomal protein uL6 family. In terms of assembly, part of the 50S ribosomal subunit.

Its function is as follows. This protein binds to the 23S rRNA, and is important in its secondary structure. It is located near the subunit interface in the base of the L7/L12 stalk, and near the tRNA binding site of the peptidyltransferase center. This chain is Large ribosomal subunit protein uL6, found in Salmonella dublin (strain CT_02021853).